Reading from the N-terminus, the 164-residue chain is Single-stranded DNA-binding protein 2 (164 aa).

Residues 5–109 enclose the SSB domain; that stretch reads INKVILVGNL…IVADEMQMLG (105 aa). The tract at residues 105 to 164 is disordered; the sequence is MQMLGGRSDGGGMGGGGERPQRQTSQRQDYAPRRQARQPSQSPQSSPPPMDDFADDDIPF. Residues 111–122 are compositionally biased toward gly residues; sequence RSDGGGMGGGGE. Residues 159 to 164 carry the Important for interaction with partner proteins motif; it reads DDDIPF.

Homotetramer.

In terms of biological role, plays an important role in DNA replication, recombination and repair. Binds to ssDNA and to an array of partner proteins to recruit them to their sites of action during DNA metabolism. This chain is Single-stranded DNA-binding protein 2 (ssb2), found in Xylella fastidiosa (strain 9a5c).